The sequence spans 245 residues: tRNA (guanine-N(1)-)-methyltransferase (245 aa).

Residues glycine 114 and 133 to 138 each bind S-adenosyl-L-methionine; that span reads IGDYVL.

The protein belongs to the RNA methyltransferase TrmD family. Homodimer.

The protein localises to the cytoplasm. It catalyses the reaction guanosine(37) in tRNA + S-adenosyl-L-methionine = N(1)-methylguanosine(37) in tRNA + S-adenosyl-L-homocysteine + H(+). Its function is as follows. Specifically methylates guanosine-37 in various tRNAs. The polypeptide is tRNA (guanine-N(1)-)-methyltransferase (Prochlorococcus marinus (strain MIT 9312)).